A 310-amino-acid polypeptide reads, in one-letter code: Protein DOS2 (310 aa).

Basic and acidic residues-rich tracts occupy residues 15–26 (DKISNSHTKETG) and 135–146 (SNDKDENSKENE). Disordered regions lie at residues 15 to 45 (DKIS…KTNE) and 131 to 151 (AEND…AVGG). One can recognise a BSD domain in the interval 176 to 228 (QLDPFDVDEKTEEICSILQGDKDISKLMNDIVPHKISYKDFWHIYFLQRNKIL). The disordered stretch occupies residues 240-310 (KKEKETEEKE…KDDDDDDDWE (71 aa)). The span at 247 to 263 (EKEVEWDDEEEEEDDDK) shows a compositional bias: acidic residues. 2 stretches are compositionally biased toward basic and acidic residues: residues 264–276 (VEAV…KGET) and 284–300 (GLKD…KDES). Over residues 301-310 (KDDDDDDDWE) the composition is skewed to acidic residues.

In terms of biological role, acts in ubiquitin metabolism and is necessary for the control of single-copy DNA replication. In Saccharomyces cerevisiae (strain ATCC 204508 / S288c) (Baker's yeast), this protein is Protein DOS2 (DOS2).